We begin with the raw amino-acid sequence, 364 residues long: TD and POZ domain-containing protein 2 (364 aa).

The 131-residue stretch at 19–149 (EFCYEWTISN…KDKLTLCCKV (131 aa)) folds into the MATH domain. The 68-residue stretch at 188–255 (TDCSLLVAGH…IYTGKAPTLH (68 aa)) folds into the BTB domain.

Belongs to the Tdpoz family.

This Mus musculus (Mouse) protein is TD and POZ domain-containing protein 2.